An 819-amino-acid chain; its full sequence is DNA topoisomerase 4 subunit A (819 aa).

Residues 30–496 (LPDIRDGLKP…QIIEIDTASL (467 aa)) enclose the Topo IIA-type catalytic domain. The O-(5'-phospho-DNA)-tyrosine intermediate role is filled by Tyr118.

This sequence belongs to the type II topoisomerase GyrA/ParC subunit family. ParC type 2 subfamily. As to quaternary structure, heterotetramer composed of ParC and ParE.

The protein resides in the cell membrane. It catalyses the reaction ATP-dependent breakage, passage and rejoining of double-stranded DNA.. In terms of biological role, topoisomerase IV is essential for chromosome segregation. It relaxes supercoiled DNA. Performs the decatenation events required during the replication of a circular DNA molecule. The chain is DNA topoisomerase 4 subunit A from Streptococcus pyogenes serotype M6 (strain ATCC BAA-946 / MGAS10394).